An 894-amino-acid chain; its full sequence is Probable ion channel SYM8 (894 aa).

The interval 1 to 124 (MAKSNEEPNS…PPSLPIAITK (124 aa)) is disordered. Composition is skewed to polar residues over residues 7-16 (EPNSNLNTNK), 24-33 (TLAQQPSLNL), and 44-63 (IGNSSSSSTKTDFEQQQRNY). The next 4 membrane-spanning stretches (helical) occupy residues 134–154 (SPIFYLFVITCVIFVPYSAFL), 204–224 (TISLYIVLFTLVLPFILYKYI), 267–287 (LALLFATLFLIAFGGLALYAV), and 319–339 (IVSVSISAGGMLIFAMMLGLV). 2 RCK N-terminal domains span residues 360-501 (RNHV…ETVV) and 620-769 (PEKI…DKSI). A coiled-coil region spans residues 390–415 (VIVVLAEKEKEEMEMDIAKLEFDFMG).

It belongs to the castor/pollux (TC 1.A.1.23) family. Homotetramer.

The protein resides in the nucleus membrane. Required for both rhizobial and mycorrhizal symbiosis. Involved in Nod-factor-induced calcium spiking. May induce a change in membrane polarization that activates the opening of a calcium channel required for calcium spiking. Might be calcium gated. This is Probable ion channel SYM8 (SYM8) from Pisum sativum (Garden pea).